A 303-amino-acid polypeptide reads, in one-letter code: Monoglyceride lipase (303 aa).

Thr-10 bears the Phosphothreonine mark. A 3'-nitrotyrosine modification is found at Tyr-58. The active-site Nucleophile is Ser-122. Ser-189 carries the phosphoserine modification. Catalysis depends on charge relay system residues Asp-239 and His-269.

This sequence belongs to the AB hydrolase superfamily. Monoacylglycerol lipase family. As to quaternary structure, homodimer. In terms of tissue distribution, ubiquitous.

Its subcellular location is the cytoplasm. It localises to the cytosol. It is found in the membrane. The enzyme catalyses Hydrolyzes glycerol monoesters of long-chain fatty acids.. It carries out the reaction a 1-acylglycerol + H2O = glycerol + a fatty acid + H(+). The catalysed reaction is a 2-acylglycerol + H2O = glycerol + a fatty acid + H(+). It catalyses the reaction 2-(5Z,8Z,11Z,14Z-eicosatetraenoyl)-glycerol + H2O = glycerol + (5Z,8Z,11Z,14Z)-eicosatetraenoate + H(+). The enzyme catalyses 1-octanoylglycerol + H2O = octanoate + glycerol + H(+). It carries out the reaction 1-decanoylglycerol + H2O = decanoate + glycerol + H(+). The catalysed reaction is 1-dodecanoylglycerol + H2O = dodecanoate + glycerol + H(+). It catalyses the reaction 1-tetradecanoylglycerol + H2O = tetradecanoate + glycerol + H(+). The enzyme catalyses 2-hexadecanoylglycerol + H2O = glycerol + hexadecanoate + H(+). It carries out the reaction 1-(9Z-octadecenoyl)-glycerol + H2O = glycerol + (9Z)-octadecenoate + H(+). The catalysed reaction is 2-(9Z-octadecenoyl)-glycerol + H2O = glycerol + (9Z)-octadecenoate + H(+). It catalyses the reaction 2-(9Z,12Z-octadecadienoyl)-glycerol + H2O = (9Z,12Z)-octadecadienoate + glycerol + H(+). The enzyme catalyses 1-(5Z,8Z,11Z,14Z-eicosatetraenoyl)-glycerol + H2O = glycerol + (5Z,8Z,11Z,14Z)-eicosatetraenoate + H(+). It carries out the reaction 1-(9Z,12Z-octadecadienoyl)-glycerol + H2O = (9Z,12Z)-octadecadienoate + glycerol + H(+). The catalysed reaction is 1-hexadecanoylglycerol + H2O = glycerol + hexadecanoate + H(+). It catalyses the reaction 1-octadecanoylglycerol + H2O = octadecanoate + glycerol + H(+). The enzyme catalyses prostaglandin E2 1-glyceryl ester + H2O = prostaglandin E2 + glycerol + H(+). It carries out the reaction prostaglandin D2-1-glycerol ester + H2O = prostaglandin D2 + glycerol + H(+). The catalysed reaction is 2-glyceryl-15-deoxy-Delta(12,14)-prostaglandin J2 + H2O = 15-deoxy-Delta(12,14)-prostaglandin J2 + glycerol + H(+). It catalyses the reaction prostaglandin F2alpha 1-glyceryl ester + H2O = prostaglandin F2alpha + glycerol + H(+). The protein operates within glycerolipid metabolism; triacylglycerol degradation. Converts monoacylglycerides to free fatty acids and glycerol. Hydrolyzes the endocannabinoid 2-arachidonoylglycerol, and thereby contributes to the regulation of endocannabinoid signaling, nociperception and perception of pain. Regulates the levels of fatty acids that serve as signaling molecules and promote cancer cell migration, invasion and tumor growth. This Mus musculus (Mouse) protein is Monoglyceride lipase.